Here is a 482-residue protein sequence, read N- to C-terminus: Protein DETOXIFICATION 9 (482 aa).

12 consecutive transmembrane segments (helical) span residues 32–49, 64–84, 111–131, 144–164, 180–200, 209–229, 261–281, 289–309, 332–352, 374–394, 403–423, and 435–455; these read VASM…QYLL, ALAG…GVLF, FTSI…WMFM, IAEL…GYSV, PMVL…WLMV, GAAA…WVYM, AMMC…SGLL, SVIS…NGIG, AAAA…SLFL, ITPI…LSGI, IGAY…GLLL, and WAGL…VIGF.

This sequence belongs to the multi antimicrobial extrusion (MATE) (TC 2.A.66.1) family.

It localises to the membrane. The polypeptide is Protein DETOXIFICATION 9 (Arabidopsis thaliana (Mouse-ear cress)).